A 900-amino-acid polypeptide reads, in one-letter code: MNEKSFNYDFSVIMPIYNVELYLTEAIESIINQTIGFENIQLILVNDDSPDKSEIICKEYAQKYPNNIVYAKKQNGGVSSARNYGLKYAEGRYIQFLDPDDLVSEGTFENVLNFFDEHKNEIDIVAIPIFFAEGRTGEHNLNNKFSSTRILDVEKEPHHILTHCCSTFIKKDALKNIRFDENCKIGEDAKLVNLIISQKKKYGLVKEAKYHYRVREDGSSAMQTAKANKNWFNHSLITFSKNLIDIIKNHEQKIPLFLQYMVMHDLKWKLLIKDISETPLDENEYSEFLTLIREVLSYIDDDVIIETKSVSHFYLYHALKIKHGENYSRYVYERETEQDYYLYREGKIVSKLSDQTLTIEILEENEDSIHIEGFWSSLFNSKGFKFYAKIGETKIKAKNIKRQHNDYISLGEVIKKYPGFSIDIPKGHLADNHHIEFFITKGKKRKLTKLRFFKYSGLSNDLYNTYVAKKDYIFYYNYKKLMFKKNNFKNRFIKEFRFLKSLHKSGEKSKKRKSAIKKALMARMVHHVFTIFNRKPVWLFIDRQDKADDNAEHLFKYAINKNDGVKKYFIIKKDSKDYDRIKKYGKVIPYRSFRHKILTLSSSKVISTHADIWVVNPFFNMEIYFRDLFNFEFIFLQHGITMADHSEWLNKYNKNIKLLVTSAKPEYRSIVKGNYNYKKENILLGGFPRYDNLKKSEGEKQLLIMPTWRKDIVLPKDQAKGVRPYNPKFKDSEYFSRYNALINDERLIEFAKKNNYKITFFPHPDIQQQIVDFEKHDYVEFADYNSSYQMLFNSSNIMITDFSSVAFDFAYEKKPVIYYQYEKSYHFKLDYYDYKKMGFGDVLENHNSLVDKVIYYMKNNSRMEDKYRKRVDNFFAYTDKNNRNRIYNAILELDNNKVAK.

Belongs to the glycosyltransferase 2 family.

Its pathway is cell wall biogenesis; poly(glucopyranosyl N-acetylgalactosamine 1-phosphate) teichoic acid biosynthesis. Involved in the biosynthesis of galactosamine-containing minor teichoic acid, a non-essential cell wall polymer in B.subtilis 168. This is Minor teichoic acid biosynthesis protein GgaB (ggaB) from Bacillus subtilis (strain 168).